Here is a 123-residue protein sequence, read N- to C-terminus: Transmembrane protein 254 (123 aa).

Helical transmembrane passes span 15–35 (LFWFTVIAVSFSYYTWVVFWP), 63–83 (NGYWLAWLVHVGESLYALVLC), and 95–115 (LLWFLQTFLFGVASLSILFAY).

Its subcellular location is the membrane. This chain is Transmembrane protein 254 (Tmem254), found in Rattus norvegicus (Rat).